Here is a 181-residue protein sequence, read N- to C-terminus: uncharacterized protein (181 aa).

This is an uncharacterized protein from Methanocaldococcus jannaschii (strain ATCC 43067 / DSM 2661 / JAL-1 / JCM 10045 / NBRC 100440) (Methanococcus jannaschii).